We begin with the raw amino-acid sequence, 364 residues long: CCA-adding enzyme (364 aa).

Residues G19 and R22 each contribute to the ATP site. Residues G19 and R22 each coordinate CTP. Mg(2+)-binding residues include D32 and D34. Positions 102, 148, and 151 each coordinate ATP. R102, R148, and R151 together coordinate CTP.

The protein belongs to the tRNA nucleotidyltransferase/poly(A) polymerase family. Bacterial CCA-adding enzyme type 2 subfamily. It depends on Mg(2+) as a cofactor.

It catalyses the reaction a tRNA precursor + 2 CTP + ATP = a tRNA with a 3' CCA end + 3 diphosphate. The catalysed reaction is a tRNA with a 3' CCA end + 2 CTP + ATP = a tRNA with a 3' CCACCA end + 3 diphosphate. Catalyzes the addition and repair of the essential 3'-terminal CCA sequence in tRNAs without using a nucleic acid template. Adds these three nucleotides in the order of C, C, and A to the tRNA nucleotide-73, using CTP and ATP as substrates and producing inorganic pyrophosphate. tRNA 3'-terminal CCA addition is required both for tRNA processing and repair. Also involved in tRNA surveillance by mediating tandem CCA addition to generate a CCACCA at the 3' terminus of unstable tRNAs. While stable tRNAs receive only 3'-terminal CCA, unstable tRNAs are marked with CCACCA and rapidly degraded. The chain is CCA-adding enzyme from Bordetella pertussis (strain Tohama I / ATCC BAA-589 / NCTC 13251).